Reading from the N-terminus, the 512-residue chain is Maturase K (512 aa).

This sequence belongs to the intron maturase 2 family. MatK subfamily.

Its subcellular location is the plastid. It localises to the chloroplast. In terms of biological role, usually encoded in the trnK tRNA gene intron. Probably assists in splicing its own and other chloroplast group II introns. The chain is Maturase K from Soldanella alpina (Alpine snowbell).